A 182-amino-acid chain; its full sequence is UPF0200 protein Mthe_1012 (182 aa).

8-15 (GMPGSGKS) is a binding site for ATP.

This sequence belongs to the UPF0200 family.

The protein is UPF0200 protein Mthe_1012 of Methanothrix thermoacetophila (strain DSM 6194 / JCM 14653 / NBRC 101360 / PT) (Methanosaeta thermophila).